The chain runs to 235 residues: Coiled-coil domain-containing protein 71L (235 aa).

A compositionally biased stretch (basic residues) spans 1–13; the sequence is MRRSMKRRRRRRP. Positions 1-30 are disordered; the sequence is MRRSMKRRRRRRPVAPATAARGGDFRAEDG. 2 positions are modified to phosphoserine: S52 and S89. Positions 109–167 are disordered; that stretch reads PDPPGPPTARGQARRPVPRAAARRRRRGARAAAARRRKPRPPPPPPPPPEESCPAKPVA. The span at 120 to 148 shows a compositional bias: basic residues; sequence QARRPVPRAAARRRRRGARAAAARRRKPR. Residues 149–159 are compositionally biased toward pro residues; it reads PPPPPPPPPEE. T185 carries the post-translational modification Phosphothreonine. Phosphoserine is present on S198.

The chain is Coiled-coil domain-containing protein 71L (CCDC71L) from Homo sapiens (Human).